The chain runs to 297 residues: Acetyl-coenzyme A carboxylase carboxyl transferase subunit beta (297 aa).

Residues 27 to 296 form the CoA carboxyltransferase N-terminal domain; the sequence is LWHKCPSCEA…PEAAKEVAAV (270 aa). 4 residues coordinate Zn(2+): Cys-31, Cys-34, Cys-50, and Cys-53. A C4-type zinc finger spans residues 31 to 53; that stretch reads CPSCEAVLYRPELEKTLDVCPKC.

The protein belongs to the AccD/PCCB family. In terms of assembly, acetyl-CoA carboxylase is a heterohexamer composed of biotin carboxyl carrier protein (AccB), biotin carboxylase (AccC) and two subunits each of ACCase subunit alpha (AccA) and ACCase subunit beta (AccD). Zn(2+) is required as a cofactor.

It localises to the cytoplasm. It catalyses the reaction N(6)-carboxybiotinyl-L-lysyl-[protein] + acetyl-CoA = N(6)-biotinyl-L-lysyl-[protein] + malonyl-CoA. It participates in lipid metabolism; malonyl-CoA biosynthesis; malonyl-CoA from acetyl-CoA: step 1/1. Component of the acetyl coenzyme A carboxylase (ACC) complex. Biotin carboxylase (BC) catalyzes the carboxylation of biotin on its carrier protein (BCCP) and then the CO(2) group is transferred by the transcarboxylase to acetyl-CoA to form malonyl-CoA. The polypeptide is Acetyl-coenzyme A carboxylase carboxyl transferase subunit beta (Pseudomonas entomophila (strain L48)).